The primary structure comprises 1455 residues: Membrane-associated guanylate kinase, WW and PDZ domain-containing protein 2 (1455 aa).

The 85-residue stretch at 17-101 (ESVIGRNPEG…PLRLKCVKQG (85 aa)) folds into the PDZ 1 domain. Residues 109 to 283 (RHYLNLRFQK…APVYSQPEEL (175 aa)) form the Guanylate kinase-like domain. The interval 205 to 306 (PGATPSAEGK…DNEEPDPLPD (102 aa)) is disordered. Residues 241-252 (VVNGNGVVVTPE) are compositionally biased toward low complexity. The span at 281 to 296 (EELKEQMDDTKPTKPE) shows a compositional bias: basic and acidic residues. WW domains lie at 302 to 335 (DPLP…DPRL) and 348 to 381 (NELP…NPVL). Positions 302–381 (DPLPDNWEMA…RRTQFENPVL (80 aa)) are interaction with DDN. Tyr362 is modified (phosphotyrosine). PDZ domains lie at 426–510 (STTL…CRGY) and 605–683 (TLTI…HRGG). Ser686 carries the post-translational modification Phosphoserine. The 83-residue stretch at 778-860 (DVHLRRMESG…NGQVNLTVRR (83 aa)) folds into the PDZ 4 domain. Residue Tyr827 is modified to Phosphotyrosine. The segment at 869–913 (CPENGRSPGSVSTHHSSPRSDYATYTNSNHAAPSSNASPPEGFAS) is disordered. Phosphoserine is present on residues Ser884 and Ser885. The span at 895–908 (NSNHAAPSSNASPP) shows a compositional bias: low complexity. In terms of domain architecture, PDZ 5 spans 920–1010 (DVVIHRKENE…SVTLRIIPQE (91 aa)). Over residues 1011-1040 (ELNSPTSAPSSEKQSPMAQQSPLAQQSPLA) the composition is skewed to polar residues. Residues 1011–1136 (ELNSPTSAPS…PDTRQYPLSD (126 aa)) form a disordered region. Residue Ser1014 is modified to Phosphoserine. The span at 1067–1083 (NSYRSEVKARQDVKPDI) shows a compositional bias: basic and acidic residues. The 83-residue stretch at 1147 to 1229 (TVDMEKGAKG…RVRLLLKRGT (83 aa)) folds into the PDZ 6 domain. The tract at residues 1231–1455 (QVPEYDEPAP…LKPGASAASR (225 aa)) is disordered. Over residues 1238–1249 (PAPWSSPAAAAP) the composition is skewed to low complexity. Positions 1287–1299 (DIKREHDVRKPKE) are enriched in basic and acidic residues. Low complexity-rich tracts occupy residues 1346 to 1363 (EARA…AARA), 1399 to 1412 (ALEA…RAGP), and 1422 to 1433 (APARKAAVAPGP).

The protein belongs to the MAGUK family. Interacts (via its WW domains) with DRPLA. Interacts (via its second PDZ domain) with PTEN (via unphosphorylated C-terminus); this interaction diminishes the degradation rate of PTEN. Interacts (via guanylate kinase domain) with DLGAP1. Interacts (via the PDZ domains) with GRIN2A, GRID2 and NLGN1. Interacts with CTNND2, CTNNB1, MAGUIN-1, ACVR2A, SMAD2 and SMAD3. Part of a complex consisting of MAGI2/ARIP1, ACVR2A, ACVR1B and SMAD3. May interact with HTR2A. Interacts with IGSF9, RAPGEF2 and HTR4. Identified in a complex with ACTN4, CASK, IQGAP1, NPHS1, SPTAN1 and SPTBN1. Found in a complex, at least composed of KIDINS220, MAGI2, NTRK1 and RAPGEF2; the complex is mainly formed at late endosomes in a NGF-dependent manner. Interacts with RAPGEF2; the interaction occurs before or after nerve growth factor (NGF) stimulation. Interacts (via PDZ domain) with KIDINS220 (via C-terminal domain). Interacts with DDN. Interacts with DLL1. Found in a complex with IGSF9B and NLGN2; the interaction with IGSF9B is mediated via the PDZ 5 and PDZ 6 domains, while the interaction with NLGN2 is mediated via the WW1, WW2 and PDZ2 domains. Interacts (via PDZ 6 domain) with USH1G (via SAM domain); the interaction is triggered by phosphorylation of USH1G by CK2 and negatively regulates MAGI2-mediated endocytosis. Specifically expressed in brain.

The protein localises to the cytoplasm. It localises to the late endosome. It is found in the synapse. Its subcellular location is the synaptosome. The protein resides in the cell membrane. The protein localises to the cytoskeleton. It localises to the microtubule organizing center. It is found in the centrosome. Its subcellular location is the cell projection. The protein resides in the cilium. The protein localises to the centriole. It localises to the photoreceptor inner segment. It is found in the photoreceptor outer segment. Functionally, seems to act as a scaffold molecule at synaptic junctions by assembling neurotransmitter receptors and cell adhesion proteins. Plays a role in nerve growth factor (NGF)-induced recruitment of RAPGEF2 to late endosomes and neurite outgrowth. May play a role in regulating activin-mediated signaling in neuronal cells. Enhances the ability of PTEN to suppress AKT1 activation. Plays a role in receptor-mediated clathrin-dependent endocytosis which is required for ciliogenesis. The protein is Membrane-associated guanylate kinase, WW and PDZ domain-containing protein 2 (MAGI2) of Homo sapiens (Human).